A 690-amino-acid polypeptide reads, in one-letter code: Iron-regulated transcriptional activator AFT1 (690 aa).

A disordered region spans residues 1–21 (MEGFNPADIEHASPINSSDSH). Residue Asp-110 participates in Zn(2+) binding. DNA contacts are provided by Lys-111, Lys-115, Ile-131, Glu-132, Arg-133, Ser-134, Asp-135, and Lys-138. Cys-143 serves as a coordination point for Zn(2+). Residues 148 to 159 (RGRNARRKRKDK) are compositionally biased toward basic residues. Residues 148–205 (RGRNARRKRKDKPKGQDHEDEKSKINDDELEYASPSNATVTNGPQTSPDQTSSIKPKK) form a disordered region. The span at 160-174 (PKGQDHEDEKSKIND) shows a compositional bias: basic and acidic residues. The segment covering 181-201 (SPSNATVTNGPQTSPDQTSSI) has biased composition (polar residues). Cys-215 contacts Zn(2+). A DNA-binding site is contributed by Lys-226. Zn(2+) is bound by residues His-239 and His-241. Asn-263 serves as a coordination point for DNA. A CDC [2Fe-2S] cluster binding motif motif is present at residues 291–293 (CDC). 2 disordered regions span residues 335 to 357 (PCLP…PKSQ) and 612 to 655 (SSNE…VQKD). Over residues 339 to 351 (SVNNTGSINTNNV) the composition is skewed to polar residues. Over residues 621–638 (HQYGPQQQPPQQLQYHQN) the composition is skewed to low complexity. Residues 639-649 (QPHDGHNHEQH) are compositionally biased toward basic and acidic residues.

Homodimer. Dimerization decreases the DNA-binding activity.

It is found in the nucleus. With respect to regulation, dimerization via the binding of Fe(2+) or a [2Fe-2S] cluster decreases the DNA-binding activity. Functionally, transcription factor that activates the genes for FRE1, FRE2 and FET3 in response to iron deprivationand thereby plays a central role in iron homeostasis. Also required for the expression of LSO1. Recognizes the consensus iron-responsive element (Fe-RE) sequence 5'-CACCC-3' in the promoters of target genes. Iron could interact directly with AFT1 and inhibits its activity. In high iron condition, the presence of Fe(2+) or [2Fe-2S] cluster leads to dimerization, which in turn leads to a decrease in DNA affinity. This is Iron-regulated transcriptional activator AFT1 from Saccharomyces cerevisiae (strain ATCC 204508 / S288c) (Baker's yeast).